The sequence spans 546 residues: 2-isopropylmalate synthase (546 aa).

One can recognise a Pyruvate carboxyltransferase domain in the interval Ile-8–Ser-271. Mn(2+)-binding residues include Asp-17, His-208, His-210, and Asn-244. Residues Gln-408–Asn-546 form a regulatory domain region.

Belongs to the alpha-IPM synthase/homocitrate synthase family. LeuA type 1 subfamily. In terms of assembly, homodimer. The cofactor is Mn(2+).

It is found in the cytoplasm. The catalysed reaction is 3-methyl-2-oxobutanoate + acetyl-CoA + H2O = (2S)-2-isopropylmalate + CoA + H(+). It functions in the pathway amino-acid biosynthesis; L-leucine biosynthesis; L-leucine from 3-methyl-2-oxobutanoate: step 1/4. Functionally, catalyzes the condensation of the acetyl group of acetyl-CoA with 3-methyl-2-oxobutanoate (2-ketoisovalerate) to form 3-carboxy-3-hydroxy-4-methylpentanoate (2-isopropylmalate). This is 2-isopropylmalate synthase from Prochlorococcus marinus (strain MIT 9301).